A 262-amino-acid chain; its full sequence is (5R,7aS)-5-hydroxy-7a-methyl-1-oxo-2,3,5,6,7,7a-hexahydro-1H-indene-carboxyl-CoA reductase (262 aa).

NAD(+) contacts are provided by Asp-50, Asp-77, Val-78, Asn-104, Tyr-170, Lys-174, and Ala-203. Tyr-170 (proton acceptor) is an active-site residue.

The protein belongs to the short-chain dehydrogenases/reductases (SDR) family.

It carries out the reaction (5R,7aS)-5-hydroxy-7a-methyl-1-oxo-2,3,5,6,7,7a-hexahydro-1H-indene-carboxyl-CoA + NAD(+) = (7aS)-7a-methyl-1,5-dioxo-2,3,5,6,7,7a-hexahydro-1H-indene-carboxyl-CoA + NADH + H(+). Its pathway is steroid metabolism; cholesterol degradation. With respect to regulation, requires the presence of IpdC. Functionally, involved in the final steps of cholesterol and steroid degradation. Probably catalyzes the oxidation of the 5-OH group of (5R,7aS)-5-hydroxy-7a-methyl-1-oxo-2,3,5,6,7,7a-hexahydro-1H-indene-carboxyl-CoA, leading to the formation of HIEC-CoA. The sequence is that of (5R,7aS)-5-hydroxy-7a-methyl-1-oxo-2,3,5,6,7,7a-hexahydro-1H-indene-carboxyl-CoA reductase from Mycobacterium tuberculosis (strain ATCC 25618 / H37Rv).